The following is a 445-amino-acid chain: Phosphoglucosamine mutase (445 aa).

Ser99 acts as the Phosphoserine intermediate in catalysis. Mg(2+) is bound by residues Ser99, Asp242, Asp244, and Asp246. Ser99 bears the Phosphoserine mark.

The protein belongs to the phosphohexose mutase family. The cofactor is Mg(2+). Activated by phosphorylation.

It catalyses the reaction alpha-D-glucosamine 1-phosphate = D-glucosamine 6-phosphate. In terms of biological role, catalyzes the conversion of glucosamine-6-phosphate to glucosamine-1-phosphate. In Campylobacter jejuni subsp. jejuni serotype O:6 (strain 81116 / NCTC 11828), this protein is Phosphoglucosamine mutase.